Consider the following 227-residue polypeptide: Ribonuclease 3 (227 aa).

The region spanning 4 to 133 is the RNase III domain; sequence FETLEKLLGY…LIAAIYLDSN (130 aa). Mg(2+) is bound at residue Glu-46. Residue Asp-50 is part of the active site. The Mg(2+) site is built by Asn-119 and Glu-122. Glu-122 is a catalytic residue. The DRBM domain maps to 158-226; sequence DPKTALQEWA…ARDLLHRLQD (69 aa).

This sequence belongs to the ribonuclease III family. Homodimer. Mg(2+) is required as a cofactor.

The protein localises to the cytoplasm. The enzyme catalyses Endonucleolytic cleavage to 5'-phosphomonoester.. Functionally, digests double-stranded RNA. Involved in the processing of primary rRNA transcript to yield the immediate precursors to the large and small rRNAs (23S and 16S). Processes some mRNAs, and tRNAs when they are encoded in the rRNA operon. Processes pre-crRNA and tracrRNA of type II CRISPR loci if present in the organism. The sequence is that of Ribonuclease 3 from Rickettsia akari (strain Hartford).